A 494-amino-acid chain; its full sequence is Alpha-amylase 1 (494 aa).

An N-terminal signal peptide occupies residues 1-18 (MFLAKSIVCLALLAVANA). A disulfide bridge links cysteine 46 with cysteine 102. Asparagine 116, arginine 165, and aspartate 174 together coordinate Ca(2+). Cysteine 153 and cysteine 167 are oxidised to a cystine. Arginine 202 lines the chloride pocket. Aspartate 204 acts as the Nucleophile in catalysis. Histidine 208 is a binding site for Ca(2+). The active-site Proton donor is glutamate 241. Positions 304 and 343 each coordinate chloride. Residues 350-370 (FTDTDQGPPTTDGQNIASPSF) form a disordered region. Positions 351–363 (TDTDQGPPTTDGQ) are enriched in low complexity. 2 cysteine pairs are disulfide-bonded: cysteine 376/cysteine 382 and cysteine 448/cysteine 460.

It belongs to the glycosyl hydrolase 13 family. As to quaternary structure, monomer. It depends on Ca(2+) as a cofactor. Chloride serves as cofactor.

It carries out the reaction Endohydrolysis of (1-&gt;4)-alpha-D-glucosidic linkages in polysaccharides containing three or more (1-&gt;4)-alpha-linked D-glucose units.. This chain is Alpha-amylase 1 (Amy35), found in Drosophila ananassae (Fruit fly).